Here is an 87-residue protein sequence, read N- to C-terminus: Kappa 1b-bungarotoxin (87 aa).

Residues 1–21 form the signal peptide; it reads MKTLLLTLVVVTIVCLDLGYT. 5 cysteine pairs are disulfide-bonded: Cys-24/Cys-42, Cys-35/Cys-63, Cys-48/Cys-52, Cys-67/Cys-79, and Cys-80/Cys-85.

It belongs to the three-finger toxin family. Long-chain subfamily. Kappa-neurotoxin sub-subfamily. In terms of assembly, homo- and heterodimer; non-covalently linked. Expressed by the venom gland.

The protein localises to the secreted. In terms of biological role, postsynaptic neurotoxin that binds and inhibits neuronal nicotinic acetylcholine receptors (nAChR) with high affinity (IC(50)&lt;100 nM). Is a selective, and slowly reversible antagonist of alpha-3/CHRNA3-containing and some alpha-4/CHRNA4-containing AChRs. This Bungarus candidus (Malayan krait) protein is Kappa 1b-bungarotoxin.